We begin with the raw amino-acid sequence, 224 residues long: Probable mitochondrial import inner membrane translocase subunit Tim17 4 (224 aa).

3 consecutive transmembrane segments (helical) span residues C16–F36, A60–V80, and A115–I135.

Belongs to the Tim17/Tim22/Tim23 family. Component of the TIM23 complex at least composed of Tim23, Tim17 (Tim17a1, Tim17a2 or Tim17b1) and a Tim50. The complex interacts with the Tim44 component of the PAM complex.

It localises to the mitochondrion inner membrane. Functionally, essential component of the TIM23 complex, a complex that mediates the translocation of transit peptide-containing proteins across the mitochondrial inner membrane. This Drosophila melanogaster (Fruit fly) protein is Probable mitochondrial import inner membrane translocase subunit Tim17 4 (Tim17a2).